Consider the following 1026-residue polypeptide: Phosphoenolpyruvate carboxylase (1026 aa).

Active-site residues include histidine 199 and lysine 672.

This sequence belongs to the PEPCase type 1 family. Requires Mg(2+) as cofactor.

It catalyses the reaction oxaloacetate + phosphate = phosphoenolpyruvate + hydrogencarbonate. Its function is as follows. Forms oxaloacetate, a four-carbon dicarboxylic acid source for the tricarboxylic acid cycle. In Nostoc sp. (strain PCC 7120 / SAG 25.82 / UTEX 2576), this protein is Phosphoenolpyruvate carboxylase (ppc).